A 97-amino-acid polypeptide reads, in one-letter code: Secreted Ly-6/uPAR domain-containing protein 2 (97 aa).

A signal peptide spans 1-22 (MQFHTGLLLAAVLSLQLAAAQA). Residues 23–95 (LWCHQCTGFG…IACCQTSLCN (73 aa)) form the UPAR/Ly6 domain. 5 disulfide bridges follow: Cys25–Cys47, Cys28–Cys34, Cys40–Cys68, Cys72–Cys88, and Cys89–Cys94.

As to quaternary structure, interacts with CHRNA3, CHRNA4, CHRNA5, CHRNA7, CHRNB2 and CHRNB4. Interacts with CHRM1 and CHRM3 probably in an allosteric manner.

The protein resides in the secreted. Functionally, binds and may modulate the functional properties of nicotinic and muscarinic acetylcholine receptors. May regulate keratinocytes proliferation, differentiation and apoptosis. In vitro moderately inhibits ACh-evoked currents of alpha-3:beta-2-containing nAChRs, strongly these of alpha-4:beta-2-containing nAChRs, modulates alpha-7-containing nAChRs, and inhibits nicotine-induced signaling probably implicating alpha-3:beta-4-containing nAChRs. Proposed to act on alpha-3:beta-2 and alpha-7 nAChRs in an orthosteric, and on mAChRs, such as CHRM1 and CHRM3, in an allosteric manner. This chain is Secreted Ly-6/uPAR domain-containing protein 2, found in Macaca mulatta (Rhesus macaque).